Reading from the N-terminus, the 397-residue chain is Succinate--CoA ligase [ADP-forming] subunit beta (397 aa).

Residues 9-254 form the ATP-grasp domain; the sequence is KALLKGYGAP…ETEEDAKEIE (246 aa). Residues Lys46, 53 to 55, Glu109, Ala112, and Glu117 each bind ATP; that span reads GRG. Mg(2+) contacts are provided by Asn209 and Asp223. Substrate is bound by residues Asn274 and 331–333; that span reads GIM.

The protein belongs to the succinate/malate CoA ligase beta subunit family. As to quaternary structure, heterotetramer of two alpha and two beta subunits. Requires Mg(2+) as cofactor.

The catalysed reaction is succinate + ATP + CoA = succinyl-CoA + ADP + phosphate. The enzyme catalyses GTP + succinate + CoA = succinyl-CoA + GDP + phosphate. It participates in carbohydrate metabolism; tricarboxylic acid cycle; succinate from succinyl-CoA (ligase route): step 1/1. Succinyl-CoA synthetase functions in the citric acid cycle (TCA), coupling the hydrolysis of succinyl-CoA to the synthesis of either ATP or GTP and thus represents the only step of substrate-level phosphorylation in the TCA. The beta subunit provides nucleotide specificity of the enzyme and binds the substrate succinate, while the binding sites for coenzyme A and phosphate are found in the alpha subunit. The protein is Succinate--CoA ligase [ADP-forming] subunit beta of Rhizobium johnstonii (strain DSM 114642 / LMG 32736 / 3841) (Rhizobium leguminosarum bv. viciae).